The following is a 365-amino-acid chain: Cobalt-precorrin-5B C(1)-methyltransferase (365 aa).

It belongs to the CbiD family.

The enzyme catalyses Co-precorrin-5B + S-adenosyl-L-methionine = Co-precorrin-6A + S-adenosyl-L-homocysteine. It functions in the pathway cofactor biosynthesis; adenosylcobalamin biosynthesis; cob(II)yrinate a,c-diamide from sirohydrochlorin (anaerobic route): step 6/10. Its function is as follows. Catalyzes the methylation of C-1 in cobalt-precorrin-5B to form cobalt-precorrin-6A. The polypeptide is Cobalt-precorrin-5B C(1)-methyltransferase (Moorella thermoacetica (strain ATCC 39073 / JCM 9320)).